The primary structure comprises 1193 residues: Laminin subunit gamma-2 (1193 aa).

The N-terminal stretch at 1-21 (MPALWLGCCLCFSLLLPAARA) is a signal peptide. Cystine bridges form between cysteine 28/cysteine 37, cysteine 30/cysteine 53, cysteine 56/cysteine 65, cysteine 68/cysteine 81, cysteine 84/cysteine 96, cysteine 86/cysteine 102, cysteine 104/cysteine 113, cysteine 116/cysteine 128, cysteine 139/cysteine 150, cysteine 141/cysteine 155, cysteine 157/cysteine 166, and cysteine 169/cysteine 184. Laminin EGF-like domains lie at 28-83 (CDCN…RCLP), 84-130 (CNCN…GCTQ), and 139-186 (CDCD…GCTQ). Positions 187–196 (CFCYGHSASC) constitute a Laminin EGF-like 4; first part domain. The region spanning 213–381 (QDVDGWKAVQ…SGAPAPWVEQ (169 aa)) is the Laminin IV type A domain. N-linked (GlcNAc...) asparagine glycans are attached at residues asparagine 342 and asparagine 362. The 34-residue stretch at 382–415 (CICPVGYKGQFCQDCASGYKRDSARLGPFGTCIP) folds into the Laminin EGF-like 4; second part domain. 3 Laminin EGF-like domains span residues 416–461 (CNCQ…SCKP), 462–516 (CPCH…PCQP), and 517–572 (CQCN…KCRA). Cystine bridges form between cysteine 462/cysteine 470, cysteine 464/cysteine 481, cysteine 484/cysteine 493, cysteine 496/cysteine 514, cysteine 517/cysteine 531, cysteine 519/cysteine 538, cysteine 541/cysteine 550, cysteine 553/cysteine 570, cysteine 573/cysteine 585, cysteine 575/cysteine 591, and cysteine 593/cysteine 602. Positions 573–602 (CNCNPMGSEPVGCRSDGTCVCKPGFGGPNC) constitute a Laminin EGF-like 8; truncated domain. Residues 603–1193 (EHGAFSCPAC…CYNTQALEQQ (591 aa)) are domain II and I. Residues 611–718 (ACYNQVKIQM…GSQYQNRVRD (108 aa)) adopt a coiled-coil conformation. O-linked (Xyl...) (chondroitin sulfate) serine glycosylation is found at serine 803 and serine 805. Coiled-coil stretches lie at residues 811–1076 (AVVQ…AVQM) and 1117–1193 (EEGL…LEQQ). Asparagine 942 and asparagine 1033 each carry an N-linked (GlcNAc...) asparagine glycan.

Laminin is a complex glycoprotein, consisting of three different polypeptide chains (alpha, beta, gamma), which are bound to each other by disulfide bonds into a cross-shaped molecule comprising one long and three short arms with globules at each end. Gamma-2 is a subunit of laminin-5 (laminin-332 or epiligrin/kalinin/nicein). Post-translationally, O-glycosylated; contains chondroitin sulfate (CS). CS attachment is on either Ser-803 or Ser-805. In terms of tissue distribution, the large variant is expressed only in specific epithelial cells of embryonic and neonatal tissues. In 17-week old embryo the small variant is found in cerebral cortex, lung, and distal tubes of kidney, but not in epithelia except for distal tubuli.

It localises to the secreted. The protein localises to the extracellular space. It is found in the extracellular matrix. The protein resides in the basement membrane. Its function is as follows. Binding to cells via a high affinity receptor, laminin is thought to mediate the attachment, migration and organization of cells into tissues during embryonic development by interacting with other extracellular matrix components. Ladsin exerts cell-scattering activity toward a wide variety of cells, including epithelial, endothelial, and fibroblastic cells. The polypeptide is Laminin subunit gamma-2 (LAMC2) (Homo sapiens (Human)).